The following is a 194-amino-acid chain: MSKSMYGYVRDAWKKPAESGVKKLLWERMQTWRRQGAVVRLERPTRIDRARELGYKAKQGIIVVRASIRRGGRRKSRYIRGRRTNRMGMRKATPGKNLQSIAEERAATRYPNMEVLNSYWVGQDGKSKYYEVILVDRNSPSVLADKNLAWVADTRGRVFRGKTSAGRRARGLHNRGTGTEKCRPSLTSHKNQGK.

A compositionally biased stretch (basic residues) spans 162-173 (KTSAGRRARGLH). Residues 162–194 (KTSAGRRARGLHNRGTGTEKCRPSLTSHKNQGK) are disordered. Positions 185 to 194 (SLTSHKNQGK) are enriched in polar residues.

This sequence belongs to the eukaryotic ribosomal protein eL15 family.

The polypeptide is Large ribosomal subunit protein eL15 (Methanocorpusculum labreanum (strain ATCC 43576 / DSM 4855 / Z)).